The primary structure comprises 2235 residues: MPLFFSALLVLLLVALSALFLGRWLVVRLATKWCQRKLQAELKIGSFRFFWIQNVSLKFQQHQQTVEIDNLWISSKLLSHDLPHYVALCFGEVRIRTDLQKVSDLSAPFSQSAGVDQKELSFSPSLLKIFCQLFSIHVDAINIMVLKVDTSESLWHIQISRSRFLLDSDGKRLICEVSLCKINSKVLKSGQLEDTCLVELSLALDLCLKVGISSRHLTAITVDVWTLHAELHEGLFQSQLLCQGPSLASKPVPCSEVTENLVEPTLPGLFLLQQLPDQVKVKMENTSVVLSMNSQKRHLTWTLKLLQFLYHRDEDQLPLRSFTANSDMAQMSTELLLEDGLLLSQSRQRIVCLNSLKASVQVTTIDLSASLVLNTCIIHYRHQEFSHWLHLLALETQGSSSPVLKQRKKRTFPQILAPIIFSTSISNVNISIQLGDTPPFALGFNSISLDYQHLRPQSIHQRGVLTVDHLCWRVGSDSHIQRAPHPPNMHVWGEALVLDSFTLQGSYNQPLGLSSTQSDTLFLDCTIRGLQVEASDTCAQCLSRILSLMGPQSGKSAVSRHSSFGESVSLLWKVDLKVEDMNLFTLSALVGASEVRLDTLTILGSAETSTVGIQGLVLALVKSVTEKMQPCCKAPDIPTPVLSLSMLSITYHSSIRSLEVQCGAGLTLLWSPPDHMYLYQHVLATLQCRDLLRATVFPETVPSLALETSGTTSELEGRAPEPLPPKRLLNLTLEVSTAKLTAFVAEDKFITLAAESVSLSRHGGSLQAYCPELAAGFDGNSIFNFKEVEVQLLPELEEMILHRNPFPALQTLRNRVWLLSFGSVSVEFPYQYDFSRTLDEAVGVQKWLKGLHQGTRAWASPSPVPLPPDLLLKVEHFSWVFLDDVFEVKLHDNYELMKDESKESAKRLQLLDAKVAALRKQHGELLPARKIEELYASLERKNIEIYIQRSRRLYGNTPMRRALLTWSLAGLELVALADASFHGPEHVVEQVQELDPGSPFPPEGLDLVIQWCRMLKCNVKSFLVRIRDYPRYLFEIRDWRLMGRLVGTEQSGQPCSRRRQILHLGLPWGNVAVERNMPPLKFYHDFHSEIFQYTVVWGPCWDPAWTLIGQCVDLLTKPSADPSPPLPWWDKSRLLFHGDWHMDIEQANLHQLATEDPYNTTENMHWEWSHLSFHWKPGQFVFKGDLDINVRTASKYDDCCFLHLPDLCMTLDLQWLCHGNPHDHHSVTLRAPEFLPEVPLGQLHDSYRAFRSENLNLSIKMDLTRHSGTISQPRILLYSSTLRWMQNFWATWTSVTRPICRGKLFNNLKPSKKKLGQHYKQLSYTALFPQLQVHYWASFAQQRGIQIECSQGHVFTRGTQRLIPQAGTVMRRLISDWSVTQMVSDLSQVTVHLMASPTEENADHCLDPLVTKTHLLSLSSLTYQRHSNRTAEEELSARDGDPTFHTHQLHLVDLRISWTTTNRDIAFGLYDGYKKAAVLKRNLSTEALKGLKIDPQMPAKKPKRGVPTSASAPPRVNTPSFSGQPDKGSSGGAYMLQKLIEETDRFVVFTEEESGMSDQLCGIAACQTDDIYNRNCLIELVNCQMVLRGAETEGCVIVSAAKAQLLQCQHHPAWYGDTLKQKTSWTCLLDGMQYFATTESSPTEQDGRQLWLEVKNIEEHRQRSLDSVQELMESGQAVGGMVTTTTDWNQPAEAQQAQQVQRIISRCNCRMYYISYSHDIDPELATQIKPPEVLENQEKEDLLKKQEGAVDTFTLIHHELEISTNPAQYAMILDIVNNLLLHVEPKRKEHSEKKQRVRFQLEISSNPEEQRSSILHLQEAVRQHVAQIRQLEKQMYSIMKSLQDDSKNENLLDLNQKLQLQLNQEKANLQLESEELNILIRCFKDFQLQRANKMELRKQQEDVSVVRRTEFYFAQARWRLTEEDGQLGIAELELQRFLYSKVNKSDDTAEHLLELGWFTMNNLLPNAVYKVVLRPQSSCQSGRQLALRLFSKVRPPVGGISVKEHFEVNVVPLTIQLTHQFFHRMMGFFFPGRSVEDDEVGDEEDKSKLVTTGIPVVKPRQLIATDDAVPLGPGKGVAQGLTRSSGVRRSFRKSPEHPVDDIDKMKERAAMNNSFIYIKIPQVPLCVSYKGEKNSVDWGDLNLVLPCLEYHNNTWTWLDFAMAVKRDSRKALVAQVIKEKLRLKSATGSEVRGKLETKSDLNMQQQEEEEKARLLIGLSVGDKNPGKKSIFGRRK.

The first 31 residues, methionine 1–threonine 31, serve as a signal peptide directing secretion. The tract at residues leucine 29–proline 108 is transmembrane domain. Serine 563 carries the post-translational modification Phosphoserine. The N-linked (GlcNAc...) asparagine glycan is linked to asparagine 730. Residues proline 1495–serine 1529 form a disordered region. The stretch at serine 1813 to aspartate 1885 forms a coiled coil. Phosphoserine occurs at positions 1846, 2090, and 2094. A disordered region spans residues glycine 2074–valine 2099.

This sequence belongs to the SABRE family. In terms of tissue distribution, expressed in pancreas, placenta and up-regulated in breast carcinoma epithelial cells, ductal in situ carcinoma (DCIS), invasive breast carcinoma (IBC) and metastatic breast carcinoma cells (MET).

The protein resides in the cell membrane. The protein localises to the endoplasmic reticulum membrane. It localises to the mitochondrion membrane. Tube-forming lipid transport protein which binds to phosphatidylinositols and affects phosphatidylinositol-4,5-bisphosphate (PtdIns-4,5-P2) distribution. This chain is Bridge-like lipid transfer protein family member 2, found in Homo sapiens (Human).